Here is a 456-residue protein sequence, read N- to C-terminus: Probable galactarate/D-glucarate transporter GudP (456 aa).

The next 10 helical transmembrane spans lie at 11–31, 51–71, 78–96, 102–119, 246–266, 280–300, 317–337, 341–361, 381–401, and 408–428; these read YLILLMLFLVTTINYADRATI, YIFSAFGWAYVLGQIPGGWLL, KVYAGSIFTWSLFTLLQGY, ISTAVVLLFLLRFMVGLA, IYLGQFCINALTYFFLTWFPV, GIIASLPAICGFLGGVLGGVI, TPIVCGMVLSMSMIICNYVDA, VVCFMALAFFGKAIGALGWAV, FGNLSSISTPIIIGYIIAATG, and SSWVPTHSFAAISYLFIVGEI.

The protein belongs to the major facilitator superfamily. Phthalate permease family.

Its subcellular location is the cell inner membrane. It carries out the reaction galactarate(in) + H(+)(in) = galactarate(out) + H(+)(out). The enzyme catalyses D-glucarate(in) + H(+)(in) = D-glucarate(out) + H(+)(out). Functionally, probably involved in the uptake of galactarate and/or D-glucarate. The protein is Probable galactarate/D-glucarate transporter GudP (gudP) of Pseudomonas putida (Arthrobacter siderocapsulatus).